Here is a 224-residue protein sequence, read N- to C-terminus: Glutathione S-transferase U8 (224 aa).

Residues 5–85 (EHVKLLGLWG…YIEDTWKTTH (81 aa)) form the GST N-terminal domain. Residues 15-16 (SP), 42-43 (NR), 56-57 (KV), and 69-70 (ES) contribute to the glutathione site. Positions 91–213 (DPYERAMARF…LPPKEKLVAV (123 aa)) constitute a GST C-terminal domain. A Phosphothreonine modification is found at T152.

It belongs to the GST superfamily. Tau family.

Its subcellular location is the cytoplasm. It localises to the cytosol. The catalysed reaction is RX + glutathione = an S-substituted glutathione + a halide anion + H(+). In terms of biological role, may be involved in the conjugation of reduced glutathione to a wide number of exogenous and endogenous hydrophobic electrophiles and have a detoxification role against certain herbicides. The polypeptide is Glutathione S-transferase U8 (GSTU8) (Arabidopsis thaliana (Mouse-ear cress)).